A 421-amino-acid polypeptide reads, in one-letter code: Imidazolonepropionase (421 aa).

Positions 81 and 83 each coordinate Fe(3+). His-81 and His-83 together coordinate Zn(2+). 3 residues coordinate 4-imidazolone-5-propanoate: Arg-90, Tyr-153, and His-186. Residue Tyr-153 coordinates N-formimidoyl-L-glutamate. His-251 contributes to the Fe(3+) binding site. His-251 serves as a coordination point for Zn(2+). Position 254 (Glu-254) interacts with 4-imidazolone-5-propanoate. Asp-326 is a Fe(3+) binding site. Residue Asp-326 participates in Zn(2+) binding. Residues Asn-328 and Gly-330 each contribute to the N-formimidoyl-L-glutamate site. A 4-imidazolone-5-propanoate-binding site is contributed by Ser-331.

It belongs to the metallo-dependent hydrolases superfamily. HutI family. The cofactor is Zn(2+). Fe(3+) is required as a cofactor.

Its subcellular location is the cytoplasm. It catalyses the reaction 4-imidazolone-5-propanoate + H2O = N-formimidoyl-L-glutamate. It participates in amino-acid degradation; L-histidine degradation into L-glutamate; N-formimidoyl-L-glutamate from L-histidine: step 3/3. Functionally, catalyzes the hydrolytic cleavage of the carbon-nitrogen bond in imidazolone-5-propanoate to yield N-formimidoyl-L-glutamate. It is the third step in the universal histidine degradation pathway. The polypeptide is Imidazolonepropionase (Streptococcus pyogenes serotype M4 (strain MGAS10750)).